The following is a 562-amino-acid chain: uncharacterized protein (562 aa).

This is an uncharacterized protein from Saccharolobus islandicus (Sulfolobus islandicus).